A 162-amino-acid polypeptide reads, in one-letter code: NADH-ubiquinone oxidoreductase chain 6 (162 aa).

The next 4 helical transmembrane spans lie at 1-21 (MIFY…FYSL), 46-66 (FSFI…VVFV), 84-104 (EILV…DPLI), and 130-150 (GGYL…ALVL).

This sequence belongs to the complex I subunit 6 family.

It localises to the mitochondrion membrane. The enzyme catalyses a ubiquinone + NADH + 5 H(+)(in) = a ubiquinol + NAD(+) + 4 H(+)(out). Its function is as follows. Core subunit of the mitochondrial membrane respiratory chain NADH dehydrogenase (Complex I) that is believed to belong to the minimal assembly required for catalysis. Complex I functions in the transfer of electrons from NADH to the respiratory chain. The immediate electron acceptor for the enzyme is believed to be ubiquinone. The sequence is that of NADH-ubiquinone oxidoreductase chain 6 (ND6) from Patiria pectinifera (Starfish).